Consider the following 137-residue polypeptide: Histone H2B.3 (137 aa).

The segment covering 1–37 (KPAEKKPAEKTPVAEKAPAEKKPKAGKKLPKDAAAGD) has biased composition (basic and acidic residues). A disordered region spans residues 1–45 (KPAEKKPAEKTPVAEKAPAEKKPKAGKKLPKDAAAGDKKKKRSKK). Residues K27 and K28 each carry the N6-acetyllysine modification. Residue K133 forms a Glycyl lysine isopeptide (Lys-Gly) (interchain with G-Cter in ubiquitin) linkage.

The protein belongs to the histone H2B family. The nucleosome is a histone octamer containing two molecules each of H2A, H2B, H3 and H4 assembled in one H3-H4 heterotetramer and two H2A-H2B heterodimers. The octamer wraps approximately 147 bp of DNA. Can be acetylated to formH2BK33ac and H2BK34ac. In terms of processing, monoubiquitinated to form H2BK143ub1; may give a specific tag for epigenetic transcriptional activation. As to expression, ubiquitous. Highest level in shoots, fruits and young flower buds, including petals, anthers and ovules.

Its subcellular location is the nucleus. The protein localises to the chromosome. Its function is as follows. Core component of nucleosome. Nucleosomes wrap and compact DNA into chromatin, limiting DNA accessibility to the cellular machineries which require DNA as a template. Histones thereby play a central role in transcription regulation, DNA repair, DNA replication and chromosomal stability. DNA accessibility is regulated via a complex set of post-translational modifications of histones, also called histone code, and nucleosome remodeling. The chain is Histone H2B.3 (H2B-3) from Solanum lycopersicum (Tomato).